The following is a 295-amino-acid chain: UDP-N-acetylenolpyruvoylglucosamine reductase (295 aa).

The 166-residue stretch at 23–188 folds into the FAD-binding PCMH-type domain; the sequence is KVGGPADFLA…ISAKFALKPG (166 aa). Arginine 167 is a catalytic residue. Residue serine 217 is the Proton donor of the active site. Glutamate 287 is an active-site residue.

The protein belongs to the MurB family. It depends on FAD as a cofactor.

Its subcellular location is the cytoplasm. It carries out the reaction UDP-N-acetyl-alpha-D-muramate + NADP(+) = UDP-N-acetyl-3-O-(1-carboxyvinyl)-alpha-D-glucosamine + NADPH + H(+). The protein operates within cell wall biogenesis; peptidoglycan biosynthesis. Functionally, cell wall formation. In Streptococcus pyogenes serotype M28 (strain MGAS6180), this protein is UDP-N-acetylenolpyruvoylglucosamine reductase.